Consider the following 269-residue polypeptide: Hydroxyethylthiazole kinase (269 aa).

Residue methionine 48 participates in substrate binding. ATP is bound by residues lysine 124 and threonine 170. Glycine 197 is a binding site for substrate.

The protein belongs to the Thz kinase family. Mg(2+) serves as cofactor.

The enzyme catalyses 5-(2-hydroxyethyl)-4-methylthiazole + ATP = 4-methyl-5-(2-phosphooxyethyl)-thiazole + ADP + H(+). Its pathway is cofactor biosynthesis; thiamine diphosphate biosynthesis; 4-methyl-5-(2-phosphoethyl)-thiazole from 5-(2-hydroxyethyl)-4-methylthiazole: step 1/1. Catalyzes the phosphorylation of the hydroxyl group of 4-methyl-5-beta-hydroxyethylthiazole (THZ). The sequence is that of Hydroxyethylthiazole kinase from Clostridium kluyveri (strain NBRC 12016).